The chain runs to 394 residues: MVLLSILRILLLWGLVLFMEHRVQMTQVGQPSIAHLPEAPTLPLIQELLEEAPGKQQRKPRILGHPLRYMLELYQRSADASGHPRENRTIGATMVRLVRPLASVARPLRGSWHIQTLDFPLRPNRVAYQLVRATVVYRHQLHLTHSHLSCHVEPWVQKSPTNHFPSSGRGSSKPSLLPKAWTEMDIMEHVGQKLWNHKGRRVLRLRFVCQQPRGSEVREFWWHGTSSLDTVFLLLYFNDTQSVQKTKPLPKGLKEFTEKDPSLLLRRARQAGSIASEVPGPSREHDGPESNLCSLHPFQVSFQQLGWDHWIIAPHLYTPNYCKGVCPRVLHYGLNSPNHAIIQNLVNELVDQSVPQPSCVPYKYVPISILLIEANGSILYKEYEGMIAQSCTCR.

An N-terminal signal peptide occupies residues 1-18 (MVLLSILRILLLWGLVLF). Residues 19 to 269 (MEHRVQMTQV…DPSLLLRRAR (251 aa)) constitute a propeptide that is removed on maturation. 2 N-linked (GlcNAc...) asparagine glycosylation sites follow: N87 and N238. 3 disulfide bridges follow: C293–C359, C322–C391, and C326–C393. A glycan (N-linked (GlcNAc...) asparagine) is linked at N375.

This sequence belongs to the TGF-beta family. In terms of assembly, homodimer or heterodimer (Potential). But, in contrast to other members of this family, cannot be disulfide-linked.

Its subcellular location is the secreted. May be involved in follicular development. Seems to be an oocyte-specific growth/differentiation factor that stimulates folliculogenesis and granulosa cell (GC) growth. This is Bone morphogenetic protein 15 (BMP15) from Bos taurus (Bovine).